We begin with the raw amino-acid sequence, 304 residues long: tRNA pseudouridine synthase B (304 aa).

Asp41 functions as the Nucleophile in the catalytic mechanism.

Belongs to the pseudouridine synthase TruB family. Type 1 subfamily.

The catalysed reaction is uridine(55) in tRNA = pseudouridine(55) in tRNA. Functionally, responsible for synthesis of pseudouridine from uracil-55 in the psi GC loop of transfer RNAs. The chain is tRNA pseudouridine synthase B from Nitratidesulfovibrio vulgaris (strain ATCC 29579 / DSM 644 / CCUG 34227 / NCIMB 8303 / VKM B-1760 / Hildenborough) (Desulfovibrio vulgaris).